The following is a 645-amino-acid chain: MRAIHCLEERLEQFHTEKCYESYQIFGAHLAVENGVHGVRFTVWAPRAKNLSVVGDFNEWNEKQHRMQKVTEAGIWSLFIPQIEEKEIYKYAIETINGEVILKADPYATYAEVRPNTASVILDIEGYEWNDKNWFRKKKKKSVYKEAMAIYELHFGSWKKKEDGSLYSYREMAEELIPYMANHHFTHIEIMPLVEHPYDRSWGYQGTGYYAVTSRFGTPHDFMYFVDECHKYGIGVILDWVPGHFCKDAHGLYLFDGTPTYEYRDLDVQENRVWGTANFDLGKREVRNFLISNALFWMKYYHIDGFRVDAVANMLYWEKEGKAQSNEYAVSFLRELNEAVFAEDGEFLMTAEDSTAWPLVTAPTYEGGLGFNYKWNMGWMNDVLKYMECAPEYRKYIHEKMTFSLLYAYSENFILPLSHDEVVHGKKSLLNKMPGNYWEKFAQLRLLYGYFFTHPGKKLLFMGGEFGQFDEWKDLEDLDWNLHEFEMHRHMHDYFKELIALYKRSKPLWQLDYSHEGFQWIDADNKEQSIFSFIRKGDREDDVLIVICNFTSIVYEKYKVGVPEFQYYNEILNSDAIAYGGSGRINKKRLKSISQPYHNQTAHVEITIPPFGVSILRPVKMRKGSKKQDGKKAELRSNATSRRKR.

Asp309 (nucleophile) is an active-site residue. The active-site Proton donor is the Glu352. Positions 621-645 (MRKGSKKQDGKKAELRSNATSRRKR) are disordered. Over residues 626–635 (KKQDGKKAEL) the composition is skewed to basic and acidic residues.

It belongs to the glycosyl hydrolase 13 family. GlgB subfamily. As to quaternary structure, monomer.

The catalysed reaction is Transfers a segment of a (1-&gt;4)-alpha-D-glucan chain to a primary hydroxy group in a similar glucan chain.. It participates in glycan biosynthesis; glycogen biosynthesis. Catalyzes the formation of the alpha-1,6-glucosidic linkages in glycogen by scission of a 1,4-alpha-linked oligosaccharide from growing alpha-1,4-glucan chains and the subsequent attachment of the oligosaccharide to the alpha-1,6 position. This is 1,4-alpha-glucan branching enzyme GlgB from Bacillus cytotoxicus (strain DSM 22905 / CIP 110041 / 391-98 / NVH 391-98).